Here is a 421-residue protein sequence, read N- to C-terminus: Polygalacturonase (421 aa).

Residues 1–20 (MKFSTAIIVSFLFIADFCAA) form the signal peptide. Asparagine 156 and asparagine 180 each carry an N-linked (GlcNAc...) asparagine glycan. PbH1 repeat units lie at residues 178–204 (CKNITFDGFTITAPGDSPNTDGIHMGK) and 205–226 (STDVKILNTNIGTGDDCVSIGD). The active-site Proton donor is aspartate 219. The active site involves histidine 242. 2 PbH1 repeats span residues 258–279 (VEGITVKNCTLTATDNGVRIKT) and 289–310 (VSDIHFEDITMTNVKNPVIIDQ). An N-linked (GlcNAc...) asparagine glycan is attached at asparagine 265. Residues 394–421 (PGAPAASTTATPAASKTATPAAGKSPAK) form a disordered region.

Belongs to the glycosyl hydrolase 28 family. Pollen specific.

It localises to the secreted. The protein localises to the cell wall. The enzyme catalyses (1,4-alpha-D-galacturonosyl)n+m + H2O = (1,4-alpha-D-galacturonosyl)n + (1,4-alpha-D-galacturonosyl)m.. Functionally, may function in the depolymerization of the pectin in its walls during pollen tube elongation, or in that of the pistil during pollination. This is Polygalacturonase from Medicago sativa (Alfalfa).